A 417-amino-acid polypeptide reads, in one-letter code: Spermidine/putrescine import ATP-binding protein PotA (417 aa).

One can recognise an ABC transporter domain in the interval 5 to 308 (IILKDLTKVF…PANRFVAQFV (304 aa)). 37 to 44 (GPSGCGKT) serves as a coordination point for ATP. The insert stretch occupies residues 105–177 (DFNSKIKDNL…TALKCKKINK (73 aa)).

Belongs to the ABC transporter superfamily. Spermidine/putrescine importer (TC 3.A.1.11.1) family. As to quaternary structure, the complex is composed of two ATP-binding proteins (PotA), two transmembrane proteins (PotB and PotC) and a solute-binding protein (PotD).

Its subcellular location is the cell membrane. The catalysed reaction is ATP + H2O + polyamine-[polyamine-binding protein]Side 1 = ADP + phosphate + polyamineSide 2 + [polyamine-binding protein]Side 1.. Functionally, part of the ABC transporter complex PotABCD involved in spermidine/putrescine import. Responsible for energy coupling to the transport system. The chain is Spermidine/putrescine import ATP-binding protein PotA from Aster yellows witches'-broom phytoplasma (strain AYWB).